A 192-amino-acid chain; its full sequence is MSKPSDRINLTNQFLIAMPNMADPTFSGTVVYLCDHSERGALGLVINRPTDIDLESLFNRIDLKLDIEPLLHIPVYFGGPVQTERGFVLHEPVEGASYNSSMSVEGGLEMTTSKDVLEAVATGTGPKRFLLTLGHAGWGAGQLEEEISRNGWLTVAADPRIVFDTPAEERFEAALGLLGVSSSMLSGEAGHA.

Belongs to the UPF0301 (AlgH) family.

The chain is UPF0301 protein Bcep18194_A3962 from Burkholderia lata (strain ATCC 17760 / DSM 23089 / LMG 22485 / NCIMB 9086 / R18194 / 383).